The sequence spans 383 residues: 3-ketosteroid-9-alpha-monooxygenase, oxygenase component (383 aa).

A Rieske domain is found at 24-126 (WHCLGPVKNF…TDVRGGLLFV (103 aa)). Residues Cys65, His67, Cys84, and His87 each contribute to the [2Fe-2S] cluster site. The Fe cation site is built by Asn173, His179, His184, and Asp302.

In terms of assembly, homotrimer. The two-component system 3-ketosteroid-9-alpha-monooxygenase is composed of an oxygenase component KshA and a reductase component KshB. Requires [2Fe-2S] cluster as cofactor. The cofactor is Fe cation.

It carries out the reaction androsta-1,4-diene-3,17-dione + 2 reduced [2Fe-2S]-[ferredoxin] + O2 + 2 H(+) = 9alpha-hydroxyandrosta-1,4-diene-3,17-dione + 2 oxidized [2Fe-2S]-[ferredoxin] + H2O. The protein operates within lipid metabolism; steroid biosynthesis. Its function is as follows. Involved in the degradation of cholesterol. Catalyzes the introduction of a 9a-hydroxyl moiety into 1,4-androstadiene-3,17-dione (ADD) to yield the 9alpha-hydroxy-1,4-androstadiene-3,17-dione (9OHADD) intermediate which spontaneously form 3-hydroxy-9,10-seconandrost-1,3,5(10)-triene-9,17-dione (HSA) via the meta-cleavage of ring B with concomitant aromatization of ring A. This is 3-ketosteroid-9-alpha-monooxygenase, oxygenase component (kshA) from Mycolicibacterium smegmatis (strain ATCC 700084 / mc(2)155) (Mycobacterium smegmatis).